The following is a 191-amino-acid chain: uncharacterized protein (191 aa).

The interval 52–112 (NKQENQTESS…TNKDTNIETN (61 aa)) is disordered. The span at 57-70 (QTESSDLNNTDSLV) shows a compositional bias: polar residues. Low complexity predominate over residues 71–94 (DSNSDNQTNTTDTSTNNVENLNEN). A coiled-coil region spans residues 138-172 (QDKISDTERIRFLEEKVSKLERKIRTLSLQMTKIS).

This is an uncharacterized protein from Acanthamoeba polyphaga mimivirus (APMV).